The primary structure comprises 258 residues: Imidazole glycerol phosphate synthase subunit HisF (258 aa).

Active-site residues include Asp-11 and Asp-130.

Belongs to the HisA/HisF family. As to quaternary structure, heterodimer of HisH and HisF.

The protein resides in the cytoplasm. It catalyses the reaction 5-[(5-phospho-1-deoxy-D-ribulos-1-ylimino)methylamino]-1-(5-phospho-beta-D-ribosyl)imidazole-4-carboxamide + L-glutamine = D-erythro-1-(imidazol-4-yl)glycerol 3-phosphate + 5-amino-1-(5-phospho-beta-D-ribosyl)imidazole-4-carboxamide + L-glutamate + H(+). It participates in amino-acid biosynthesis; L-histidine biosynthesis; L-histidine from 5-phospho-alpha-D-ribose 1-diphosphate: step 5/9. In terms of biological role, IGPS catalyzes the conversion of PRFAR and glutamine to IGP, AICAR and glutamate. The HisF subunit catalyzes the cyclization activity that produces IGP and AICAR from PRFAR using the ammonia provided by the HisH subunit. The chain is Imidazole glycerol phosphate synthase subunit HisF from Photorhabdus laumondii subsp. laumondii (strain DSM 15139 / CIP 105565 / TT01) (Photorhabdus luminescens subsp. laumondii).